The chain runs to 989 residues: Vacuolar membrane protease (989 aa).

The tract at residues 1 to 25 is disordered; it reads MDRQSLRTTLRAMDASNENGSAKGA. The Cytoplasmic portion of the chain corresponds to 1 to 41; it reads MDRQSLRTTLRAMDASNENGSAKGAKKTTIGSFVRWTFGFN. Residues 42–62 traverse the membrane as a helical segment; the sequence is SVPLTTLVTITTVLLGLLVYV. Topologically, residues 63-383 are vacuolar; it reads STSVNPPDVT…YLFIILPLQY (321 aa). Zn(2+) is bound by residues H181 and D193. Residue E227 is the Proton acceptor of the active site. Zn(2+) is bound at residue E228. The N-linked (GlcNAc...) asparagine glycan is linked to N245. Zn(2+) contacts are provided by E253 and H325. Residues 384–404 traverse the membrane as a helical segment; sequence IFVISCLTLAVGPIFVGFLFL. At 405–426 the chain is on the cytoplasmic side; sequence LVLRKQINAGTSETILGGWLRS. The helical transmembrane segment at 427-447 threads the bilayer; it reads IVSVLVSVVATYFVVETLHLG. Over 448–460 the chain is Vacuolar; sequence NELYVVRSFYTPL. A helical transmembrane segment spans residues 461–481; that stretch reads FAGLGTFIFVNYVLLGFFHFV. Residues 482 to 488 lie on the Cytoplasmic side of the membrane; it reads RPVCDQK. Residues 489–509 form a helical membrane-spanning segment; the sequence is LIILLELSVVLWVLLLLSVIH. The Vacuolar portion of the chain corresponds to 510-520; sequence EATHKATGEYH. The helical transmembrane segment at 521 to 541 threads the bilayer; that stretch reads FLILYIVVATASILGLFGHLV. At 542-611 the chain is on the cytoplasmic side; it reads TSTETSTFVE…IAVSMGYDWS (70 aa). The tract at residues 548–576 is disordered; it reads TFVEGPEDEEDTVDASEATETSPLLPEAS. Over residues 552 to 561 the composition is skewed to acidic residues; it reads GPEDEEDTVD. A helical membrane pass occupies residues 612-632; that stretch reads IQFLLVVPITFFVTFGLAASL. Topologically, residues 633-648 are vacuolar; it reads LDGLHQTPLESEKSAD. The chain crosses the membrane as a helical span at residues 649 to 669; sequence FVYTTITAMSVLVGITFLPFV. Residues 670–673 are Cytoplasmic-facing; it reads HKLQ. Residues 674–694 form a helical membrane-spanning segment; sequence VFVPIVVVGVAVTASFVHILS. Residues 695–989 are Vacuolar-facing; sequence PPFSSNAPAK…LVEVSKYVEL (295 aa). N745, N793, and N822 each carry an N-linked (GlcNAc...) asparagine glycan.

Belongs to the peptidase M28 family. The cofactor is Zn(2+).

Its subcellular location is the vacuole membrane. Functionally, may be involved in vacuolar sorting and osmoregulation. This is Vacuolar membrane protease from Yarrowia lipolytica (strain CLIB 122 / E 150) (Yeast).